Reading from the N-terminus, the 187-residue chain is Elongation factor P (187 aa).

It belongs to the elongation factor P family.

The protein resides in the cytoplasm. The protein operates within protein biosynthesis; polypeptide chain elongation. Functionally, involved in peptide bond synthesis. Stimulates efficient translation and peptide-bond synthesis on native or reconstituted 70S ribosomes in vitro. Probably functions indirectly by altering the affinity of the ribosome for aminoacyl-tRNA, thus increasing their reactivity as acceptors for peptidyl transferase. This is Elongation factor P from Desulfosudis oleivorans (strain DSM 6200 / JCM 39069 / Hxd3) (Desulfococcus oleovorans).